Here is a 260-residue protein sequence, read N- to C-terminus: Small ribosomal subunit protein eS1 (260 aa).

A compositionally biased stretch (basic residues) spans Met-1–Lys-18. Residues Met-1 to Asp-22 form a disordered region.

Belongs to the eukaryotic ribosomal protein eS1 family. Component of the small ribosomal subunit. Mature ribosomes consist of a small (40S) and a large (60S) subunit. The 40S subunit contains about 33 different proteins and 1 molecule of RNA (18S). The 60S subunit contains about 49 different proteins and 3 molecules of RNA (25S, 5.8S and 5S).

The protein resides in the cytoplasm. The chain is Small ribosomal subunit protein eS1 from Helianthus annuus (Common sunflower).